We begin with the raw amino-acid sequence, 532 residues long: Exodeoxyribonuclease 7 large subunit (532 aa).

Positions 497 to 532 (AITTGEGTPAPETAAAPKKKPAKPASSDPGNQGNLF) are disordered. Residues 499–512 (TTGEGTPAPETAAA) are compositionally biased toward low complexity.

It belongs to the XseA family. As to quaternary structure, heterooligomer composed of large and small subunits.

It is found in the cytoplasm. It carries out the reaction Exonucleolytic cleavage in either 5'- to 3'- or 3'- to 5'-direction to yield nucleoside 5'-phosphates.. In terms of biological role, bidirectionally degrades single-stranded DNA into large acid-insoluble oligonucleotides, which are then degraded further into small acid-soluble oligonucleotides. The chain is Exodeoxyribonuclease 7 large subunit from Agrobacterium fabrum (strain C58 / ATCC 33970) (Agrobacterium tumefaciens (strain C58)).